The following is a 161-amino-acid chain: uncharacterized protein (161 aa).

A run of 4 helical transmembrane segments spans residues Leu-22–His-42, Leu-43–Val-63, Leu-89–Gly-109, and Val-110–Leu-130. Residues Val-141–Asp-161 are disordered.

The protein to M.leprae ML1138.

Its subcellular location is the cell membrane. This is an uncharacterized protein from Mycobacterium bovis (strain ATCC BAA-935 / AF2122/97).